A 512-amino-acid chain; its full sequence is Histidine ammonia-lyase (512 aa).

The segment at residues 143 to 145 (CSG) is a cross-link (5-imidazolinone (Cys-Gly)). Position 144 is a 2,3-didehydroalanine (Ser) (S144).

Belongs to the PAL/histidase family. Post-translationally, contains an active site 4-methylidene-imidazol-5-one (MIO), which is formed autocatalytically by cyclization and dehydration of residues Cys-Ser-Gly.

It localises to the cytoplasm. The catalysed reaction is L-histidine = trans-urocanate + NH4(+). It participates in amino-acid degradation; L-histidine degradation into L-glutamate; N-formimidoyl-L-glutamate from L-histidine: step 1/3. This is Histidine ammonia-lyase from Streptomyces avermitilis (strain ATCC 31267 / DSM 46492 / JCM 5070 / NBRC 14893 / NCIMB 12804 / NRRL 8165 / MA-4680).